Here is a 23-residue protein sequence, read N- to C-terminus: Caerin-4.1 (23 aa).

Expressed by the skin parotoid and/or rostral glands.

The protein resides in the secreted. Antibacterial peptide, that adopts an alpha helical conformation which can disrupt bacterial membranes. Each caerin displays a different antimicrobial specificity. This chain is Caerin-4.1, found in Ranoidea caerulea (Green tree frog).